The sequence spans 138 residues: Putative pre-16S rRNA nuclease (138 aa).

Belongs to the YqgF nuclease family.

The protein localises to the cytoplasm. Its function is as follows. Could be a nuclease involved in processing of the 5'-end of pre-16S rRNA. The polypeptide is Putative pre-16S rRNA nuclease (Klebsiella pneumoniae subsp. pneumoniae (strain ATCC 700721 / MGH 78578)).